A 187-amino-acid chain; its full sequence is Putative lipoprotein LppJ (187 aa).

An N-terminal signal peptide occupies residues 1-28 (MPHSTADRRLRLTRQALLAAAVVPLLAG). Residue cysteine 29 is the site of N-palmitoyl cysteine attachment. A lipid anchor (S-diacylglycerol cysteine) is attached at cysteine 29.

It is found in the cell membrane. The protein is Putative lipoprotein LppJ (lppJ) of Mycobacterium tuberculosis (strain CDC 1551 / Oshkosh).